Reading from the N-terminus, the 424-residue chain is MNKIINNVFAREILDSRGYPTIEVEIELCDGAIGRASVPSGASTGKLEALELRDQDEKRYCGKGVLKAVQAVNGIIADEIIGMNAADQNAIDKALIELDGTKNKSKLGANATLGVSLAVAKAAANSFKMPLYRYLGGKQTSVMPVPLINIINGGVHADNKLDFQEFMILPVGAETFSEAIRISAEVFHNLRSILKKKGYSTNVGDEGGFAPNIESTEEALDLIIYAIESAGYSAQSDFALGLDVASSTFYEDGIYEFESKGLTSEELTEYYCNLVERYPIISIEDAMSEDDYEGWKLLTAKLGNKIQLVGDDLFVTNCELICKGIEEKMANAVLIKPNQIGTLTETFAAIEMAKSNGYKAVVSHRSGETEDTTISHIAVASNCGQIKTGSLSRSDRLAKYNELMRIESTLGKDAKYYRGLAWVL.

Gln-164 provides a ligand contact to (2R)-2-phosphoglycerate. Glu-206 functions as the Proton donor in the catalytic mechanism. The Mg(2+) site is built by Asp-243, Glu-284, and Asp-311. 4 residues coordinate (2R)-2-phosphoglycerate: Lys-336, Arg-365, Ser-366, and Lys-387. Lys-336 acts as the Proton acceptor in catalysis.

The protein belongs to the enolase family. It depends on Mg(2+) as a cofactor.

The protein resides in the cytoplasm. The protein localises to the secreted. Its subcellular location is the cell surface. It catalyses the reaction (2R)-2-phosphoglycerate = phosphoenolpyruvate + H2O. It functions in the pathway carbohydrate degradation; glycolysis; pyruvate from D-glyceraldehyde 3-phosphate: step 4/5. In terms of biological role, catalyzes the reversible conversion of 2-phosphoglycerate (2-PG) into phosphoenolpyruvate (PEP). It is essential for the degradation of carbohydrates via glycolysis. This Wolbachia sp. subsp. Drosophila simulans (strain wRi) protein is Enolase.